The primary structure comprises 1500 residues: Alpha-1-macroglobulin (1500 aa).

An N-terminal signal peptide occupies residues 1-24 (MRRNQLPIPVFLLLLLLLPRDATA). A disulfide bond links cysteine 48 and cysteine 86. N-linked (GlcNAc...) asparagine glycosylation is found at asparagine 55, asparagine 61, and asparagine 157. 2 cysteine pairs are disulfide-bonded: cysteine 249/cysteine 298 and cysteine 267/cysteine 286. 2 N-linked (GlcNAc...) asparagine glycosylation sites follow: asparagine 382 and asparagine 412. Cysteine 469 and cysteine 562 are oxidised to a cystine. An N-linked (GlcNAc...) asparagine glycan is attached at asparagine 568. 6 cysteine pairs are disulfide-bonded: cysteine 594-cysteine 785, cysteine 642-cysteine 689, cysteine 835-cysteine 863, cysteine 861-cysteine 897, cysteine 935-cysteine 1344, and cysteine 1094-cysteine 1142. Positions 686 to 746 (PRYCPMYQAY…QEVEVRETVR (61 aa)) are bait region. N-linked (GlcNAc...) asparagine glycosylation is found at asparagine 883 and asparagine 944. Positions 986–989 (CGEQ) form a cross-link, isoglutamyl cysteine thioester (Cys-Gln). Asparagine 1005 carries an N-linked (GlcNAc...) asparagine glycan. The tract at residues 1360-1500 (EGEAPFTLKV…FSSDSEQGNA (141 aa)) is receptor-binding domain. Residues asparagine 1390 and asparagine 1448 are each glycosylated (N-linked (GlcNAc...) asparagine).

It belongs to the protease inhibitor I39 (alpha-2-macroglobulin) family. In terms of assembly, homotetramer; disulfide-linked. As to expression, widely expressed. Highest level in ovary, testis, uterus and prostate. Protein found in plasma.

It is found in the secreted. Its function is as follows. Is able to inhibit all four classes of proteinases by a unique 'trapping' mechanism. This protein has a peptide stretch, called the 'bait region' which contains specific cleavage sites for different proteinases. When a proteinase cleaves the bait region, a conformational change is induced in the protein which traps the proteinase. The entrapped enzyme remains active against low molecular weight substrates (activity against high molecular weight substrates is greatly reduced). Following cleavage in the bait region a thioester bond is hydrolyzed and mediates the covalent binding of the protein to the proteinase. The polypeptide is Alpha-1-macroglobulin (Rattus norvegicus (Rat)).